A 291-amino-acid chain; its full sequence is Glycolipid transfer protein domain-containing protein 2 (291 aa).

Asn-276 carries an N-linked (GlcNAc...) asparagine glycan.

This sequence belongs to the GLTP family.

In Homo sapiens (Human), this protein is Glycolipid transfer protein domain-containing protein 2 (GLTPD2).